The following is a 467-amino-acid chain: Chromosomal replication initiator protein DnaA (467 aa).

Residues 1–90 are domain I, interacts with DnaA modulators; the sequence is MSLSLWQQCL…KSVTQTPQAA (90 aa). The segment at 91–130 is domain II; that stretch reads VTSNVAAPAQVAQTQPQRAAPSTRSGWDNVPAPAEPTYRS. The segment covering 97–111 has biased composition (low complexity); sequence APAQVAQTQPQRAAP. The segment at 97 to 119 is disordered; sequence APAQVAQTQPQRAAPSTRSGWDN. The domain III, AAA+ region stretch occupies residues 131–347; the sequence is NVNVKHTFDN…GALNRVIANA (217 aa). Residues Gly175, Gly177, Lys178, and Thr179 each contribute to the ATP site. The domain IV, binds dsDNA stretch occupies residues 348-467; it reads NFTGRAITID…FSNLIRTLSS (120 aa).

This sequence belongs to the DnaA family. In terms of assembly, oligomerizes as a right-handed, spiral filament on DNA at oriC.

The protein localises to the cytoplasm. In terms of biological role, plays an essential role in the initiation and regulation of chromosomal replication. ATP-DnaA binds to the origin of replication (oriC) to initiate formation of the DNA replication initiation complex once per cell cycle. Binds the DnaA box (a 9 base pair repeat at the origin) and separates the double-stranded (ds)DNA. Forms a right-handed helical filament on oriC DNA; dsDNA binds to the exterior of the filament while single-stranded (ss)DNA is stabiized in the filament's interior. The ATP-DnaA-oriC complex binds and stabilizes one strand of the AT-rich DNA unwinding element (DUE), permitting loading of DNA polymerase. After initiation quickly degrades to an ADP-DnaA complex that is not apt for DNA replication. Binds acidic phospholipids. The polypeptide is Chromosomal replication initiator protein DnaA (Escherichia coli O157:H7).